The sequence spans 164 residues: 6,7-dimethyl-8-ribityllumazine synthase (164 aa).

5-amino-6-(D-ribitylamino)uracil-binding positions include Phe-24, 62–64 (SFE), and 86–88 (AVI). A (2S)-2-hydroxy-3-oxobutyl phosphate-binding site is contributed by 91-92 (QT). The active-site Proton donor is His-94. Position 119 (Phe-119) interacts with 5-amino-6-(D-ribitylamino)uracil. Arg-133 is a (2S)-2-hydroxy-3-oxobutyl phosphate binding site.

It belongs to the DMRL synthase family.

The catalysed reaction is (2S)-2-hydroxy-3-oxobutyl phosphate + 5-amino-6-(D-ribitylamino)uracil = 6,7-dimethyl-8-(1-D-ribityl)lumazine + phosphate + 2 H2O + H(+). The protein operates within cofactor biosynthesis; riboflavin biosynthesis; riboflavin from 2-hydroxy-3-oxobutyl phosphate and 5-amino-6-(D-ribitylamino)uracil: step 1/2. Functionally, catalyzes the formation of 6,7-dimethyl-8-ribityllumazine by condensation of 5-amino-6-(D-ribitylamino)uracil with 3,4-dihydroxy-2-butanone 4-phosphate. This is the penultimate step in the biosynthesis of riboflavin. This is 6,7-dimethyl-8-ribityllumazine synthase from Synechocystis sp. (strain ATCC 27184 / PCC 6803 / Kazusa).